We begin with the raw amino-acid sequence, 572 residues long: DNA polymerase (572 aa).

The tract at residues 1 to 222 is 3'-5' exonuclease and strand displacement activities; the sequence is MSRKMFSCDF…LPMDKEIRKA (222 aa). The interval 56 to 66 is interaction with the primer terminal protein; the sequence is YFHNLKFDGAF. Mg(2+) is bound by residues Asp142 and Asp166. The DNA-binding; Involved in the formation of a stable complex between TP and phi29 DNA polymerase stretch occupies residues 223 to 226; that stretch reads YRGG. Residues 227 to 572 are initiation, polymerization and pyrophosphorolytic activities; it reads FTWLNDKYKE…VLVDSVFTIK (346 aa). Mg(2+) contacts are provided by Asp246 and Val247. Residues Tyr251, Lys368, and Lys380 each contribute to the 5-methyl-UTP site. Mg(2+)-binding residues include Asp453 and Asp455. Asp455 is a binding site for 5-methyl-UTP.

This sequence belongs to the DNA polymerase type-B family. Interacts with the primer terminal protein; this interaction allows the initiation of TP-primed DNA replication at both viral DNA ends. Interacts with DNA. The cofactor is Mg(2+).

It catalyses the reaction DNA(n) + a 2'-deoxyribonucleoside 5'-triphosphate = DNA(n+1) + diphosphate. In terms of biological role, polymerase responsible for protein-primed viral DNA replication by strand displacement with high processivity and fidelity. To start replication, the DNA polymerase forms a heterodimer with a free primer terminal protein (TP), recognizes the replication origins at both 5' ends of the linear chromosome, and initiates replication using as primer the OH-group of Ser-232 of the TP. This polymerase possesses three enzymatic activities: DNA synthesis (polymerase), primer terminal protein (TP) deoxynucleotidylation, which is the formation of a covalent linkage (phosphoester) between the hydroxyl group of a specific serine residue in TP and 5'-dAMP, a reaction directed by the third T at the 3' end, and 3' to 5' exonuclease activity. Exonuclease activity has a proofreading purpose. Since the polymerase initiates the replication on the third thymine, the TP-dAMP initiation product translocates backwards to recover the template information of the 2 terminal nucleotide (sliding back-mechanism). In Bacillus phage Nf (Bacteriophage Nf), this protein is DNA polymerase.